We begin with the raw amino-acid sequence, 354 residues long: Rhodopsin (354 aa).

Residues 1-36 (MNGTEGPNFYIPMSNKTGVVRSPFEYPQYYLAEPWQ) are Extracellular-facing. Residues Asn-2 and Asn-15 are each glycosylated (N-linked (GlcNAc...) asparagine). Residues 37–61 (YSILCAYMFLLILLGFPINFMTLYV) form a helical membrane-spanning segment. The Cytoplasmic segment spans residues 62-73 (TIQHKKLRTPLN). Residues 74-96 (YILLNLAFANHFMVLCGFTVTMY) traverse the membrane as a helical segment. The Extracellular portion of the chain corresponds to 97–110 (SSMNGYFILGATGC). Cys-110 and Cys-187 are disulfide-bonded. The helical transmembrane segment at 111-133 (YVEGFFATLGGEIALWSLVVLAI) threads the bilayer. The 'Ionic lock' involved in activated form stabilization signature appears at 134–136 (ERY). The Cytoplasmic portion of the chain corresponds to 134-152 (ERYVVVCKPMSNFRFSENH). A helical membrane pass occupies residues 153–173 (AVMGVAFTWIMALSCAVPPLL). At 174-202 (GWSRYIPEGMQCSCGVDYYTLKPEVNNES) the chain is on the extracellular side. Residues 203 to 224 (FVIYMFVVHFTIPLIIIFFCYG) form a helical membrane-spanning segment. Residues 225-252 (RLVCTVKEAAAQQQESATTQKAEKEVTR) are Cytoplasmic-facing. Residues 253–274 (MVIIMVVFFLICWVPYASVAFF) traverse the membrane as a helical segment. Topologically, residues 275 to 286 (IFSNQGSEFGPI) are extracellular. Residues 287-308 (FMTVPAFFAKSSSIYNPVIYIM) traverse the membrane as a helical segment. Lys-296 is modified (N6-(retinylidene)lysine). Residues 309–354 (LNKQFRNCMITTLCCGKNPFGEDDASSAATSKTEASSVSSSQVSPA) are Cytoplasmic-facing. 2 S-palmitoyl cysteine lipidation sites follow: Cys-322 and Cys-323. Residues 331-354 (DDASSAATSKTEASSVSSSQVSPA) form a disordered region. The segment covering 334–354 (SSAATSKTEASSVSSSQVSPA) has biased composition (low complexity).

Belongs to the G-protein coupled receptor 1 family. Opsin subfamily. In terms of processing, contains one covalently linked retinal chromophore. Upon light absorption, the covalently bound 11-cis-retinal is converted to all-trans-retinal. After hydrolysis of the Schiff base and release of the covalently bound all-trans-retinal, active rhodopsin is regenerated by binding of a fresh molecule of 11-cis-retinal.

It is found in the membrane. Its subcellular location is the cell projection. It localises to the cilium. The protein resides in the photoreceptor outer segment. In terms of biological role, photoreceptor required for image-forming vision at low light intensity. Required for photoreceptor cell viability after birth. Light-induced isomerization of 11-cis to all-trans retinal triggers a conformational change that activates signaling via G-proteins. Subsequent receptor phosphorylation mediates displacement of the bound G-protein alpha subunit by arrestin and terminates signaling. The sequence is that of Rhodopsin (RHO) from Bufo bufo (European toad).